We begin with the raw amino-acid sequence, 1089 residues long: PALM2-AKAP2 fusion protein (1089 aa).

Positions 70 to 107 form a coiled coil; sequence SEEDEFKVKQLEDNIQRLEQEIQALESEESQISAKEQI. Disordered stretches follow at residues 165 to 194, 210 to 231, and 289 to 362; these read SEDANQLRSKQDNCGDSRLEPAASSLSPDH, PGVTSTPHSKDHSSPFYSPSHN, and PAHS…SRDG. Over residues 173 to 183 the composition is skewed to basic and acidic residues; that stretch reads SKQDNCGDSRL. R315 and S318 each carry phosphoserine. The segment covering 317 to 328 has biased composition (basic and acidic residues); the sequence is PSDRMAEGERAN. Residues 329 to 347 show a composition bias toward polar residues; that stretch reads GHSTDQPQDLLGNSLQAPA. Phosphoserine is present on S348. Low complexity predominate over residues 348–357; it reads SPSSSTSSHC. K370 is covalently cross-linked (Glycyl lysine isopeptide (Lys-Gly) (interchain with G-Cter in SUMO1); alternate). A Glycyl lysine isopeptide (Lys-Gly) (interchain with G-Cter in SUMO2); alternate cross-link involves residue K370. Positions 429–517 are disordered; sequence KNPGIAAKWW…LSTSQPCTAP (89 aa). The span at 455-470 shows a compositional bias: basic and acidic residues; sequence LESHRKYKERKEKRAQ. Over residues 471 to 508 the composition is skewed to low complexity; that stretch reads QEQLQLQQQQQQQLQQQQLQQQQLQQQQLQQQLQQQQL. Phosphoserine is present on S553. Residues 592-644 are disordered; it reads TVGGTLEDGGTQAAKEQKAPCVSESQSAGAGPANAATQGKEGPYSEPSKRGPL. 3 positions are modified to phosphoserine: S678, S682, and S734. Over residues 712–749 the composition is skewed to polar residues; the sequence is FSMDNISDSGASNETPSALQENSLADFSLPQTPQTDNP. Disordered stretches follow at residues 712–783, 800–899, and 915–934; these read FSMD…DPLE, EQVD…YFSK, and TQESDVMVGPFKLRSRKQRT. T743 carries the post-translational modification Phosphothreonine. The PKA-RII subunit binding domain stretch occupies residues 782-795; it reads LEYQAGLLVQNAIQ. Residues 801–814 are compositionally biased toward basic and acidic residues; the sequence is QVDKAEAHTSKEGS. A Phosphoserine modification is found at S847. The span at 850 to 871 shows a compositional bias: basic and acidic residues; sequence QEKRDILPKNLPAEDRALREKG. Positions 928–958 form a coiled coil; that stretch reads RSRKQRTLSMIEEEIRAAQEREEELKRQRQV. S936, S964, S995, and S1002 each carry phosphoserine. The interval 946–1021 is disordered; that stretch reads QEREEELKRQ…AAGTQRPKNL (76 aa).

Highly expressed in lung and weakly in thymus and cerebellum. Little or no expression in liver, heart and cerebral cortex. All isoforms are expressed in lung, but KL2A and KL2B isoforms are the principal isoforms in cerebellum.

The protein resides in the apical cell membrane. Binds to regulatory subunit (RII) of protein kinase A. May be involved in establishing polarity in signaling systems or in integrating PKA-RII isoforms with downstream effectors to capture, amplify and focus diffuse, trans-cellular signals carried by cAMP. Binds tp and modulates the structure of the actin cytoskeleton. This is PALM2-AKAP2 fusion protein from Mus musculus (Mouse).